We begin with the raw amino-acid sequence, 210 residues long: SAP domain-containing ribonucleoprotein (210 aa).

At A2 the chain carries N-acetylalanine. One can recognise an SAP domain in the interval 8–42 (LHKLKLAELKQECLARGLETKGIKQDLINRLQAYL). K10 carries the post-translational modification N6-acetyllysine. Residues 45–64 (HAEEEANEEDVLGDETEEEE) are compositionally biased toward acidic residues. A disordered region spans residues 45 to 87 (HAEEEANEEDVLGDETEEEEPKPIELPVKEEEPPEKVVDMASE). Residues 65-87 (PKPIELPVKEEEPPEKVVDMASE) are compositionally biased toward basic and acidic residues. K142 carries the post-translational modification N6-acetyllysine. Positions 161 to 210 (VSSISRKSEDDEKLKKRKERFGIVTSSAGTGTTEDTEAKKRKRAERFGIA) are disordered. S163 is modified (phosphoserine). Over residues 184–193 (VTSSAGTGTT) the composition is skewed to polar residues.

This sequence belongs to the SAP domain-containing ribonucleoprotein family. In terms of assembly, interacts with DDX39A. Interacts with FUS. Interacts (via the C-terminal domain) with DDX39B; the interaction is direct and facilitates RNA binding of DDX39B. Component of the transcription/export (TREX) complex at least composed of ALYREF/THOC4, DDX39B, SARNP/CIP29, CHTOP and the THO subcomplex; TREX seems to have dynamic structure involving ATP-dependent remodeling; in the complex interacts directly with DDX39B in a ATP-dependent manner which bridges it to ALYREF/THOC4.

Its subcellular location is the nucleus. The protein localises to the nucleus speckle. Binds both single-stranded and double-stranded DNA with higher affinity for the single-stranded form. Specifically binds to scaffold/matrix attachment region DNA. Also binds single-stranded RNA. Enhances RNA unwinding activity of DDX39A. May participate in important transcriptional or translational control of cell growth, metabolism and carcinogenesis. Component of the TREX complex which is thought to couple mRNA transcription, processing and nuclear export, and specifically associates with spliced mRNA and not with unspliced pre-mRNA. The TREX complex is recruited to spliced mRNAs by a transcription-independent mechanism, binds to mRNA upstream of the exon-junction complex (EJC) and is recruited in a splicing- and cap-dependent manner to a region near the 5' end of the mRNA where it functions in mRNA export to the cytoplasm via the TAP/NXF1 pathway. Associates with DDX39B, which facilitates RNA binding of DDX39B and likely plays a role in mRNA export. This Rattus norvegicus (Rat) protein is SAP domain-containing ribonucleoprotein (Sarnp).